Consider the following 1230-residue polypeptide: MEISKPKGSTWTDDQWKAIVSSGRDILVAAAAGSGKTAVLVERIIRKITDQERPVDVDRLLVVTFTNASAAEMKHRIGEALEKELAENPGSLHLRRQLALLNKASISTLHSFCLQVIRKYYYLIDVDPAFRIADQTEGELLGDEVLDELFEEEYKKGNPAFFELVDRYTTDRHDLDLQHLVKRVYEFSRSHPDPEGWLHSLAELYDAASDTKVEALPFYSYIKEDIALVLEGMRQKLTRALDLTKQPGGPAPRAENFLDDLAQIDRLIQQQDDFSALHELVPTVSFQRLKPCKGDEYDPRLVDEAADLRNSAKKQLEKLKSDYFSRTPEQHLESLREMKPVIQTLVQLVLEYGRRFAEAKKEKAIVDFSDLEHDCLAILSVKNPAGEAVPSEAAKFYRHQFHEVLVDEYQDTNLVQEAILKLVAKEEHEGNLFMVGDVKQSIYRFRLAEPLLFLSKYKRFTDDGSGSGQKIDLNKNFRSRSDILDSTNFLFKQLMGEKVGEVEYDEQAELKLGASYPPNEATKTELLLIETPSGAPGEEAEELEAVQLEARAMAGQIRRLITEKFQVYDAKAKASRNIQYRDIVVLLRSMPWAPQIMDEFKQQGIPVYANLSTGYFEATEVSVTLSLLKIIDNAYQDIPLASVLRSPVVGLDENELSLIRIKDKKAPFYEAMKAYLAAADGDERLSEKLRRFDGLLKKWRAYAKNHSVAELIWEIYRDTKYLDYVGGMPGGKQRQANLRALYDRARSYEATSFRGLFRFLRFIERMQERGDDLGTARALSEQEDVVRLMTIHSSKGLEFPVVFTAGLGRNFNMMDLNKSYLLDKELGFGTKFIHPKWRISYPTLPLIAMKKKLRRELLSEELRVLYVALTRAKEKLYLVGTAKDKEKLLADWRTQAAGSEWLLPDYERFQAKSYLDFIGPALMRHRDMDESGAPPVIDEIREHPARFQVSWLSAADLQAEAVDQAGEERHDRLVQIQMGHAIEGAFEYEQQVRERLAWSYPYKDAAKVRTKQSVSEMKRQKEYEDEYGDRSLIRPSQEALLFKRPSFMMAKGLTAAERGTAMHTVMQHIPLTRTPEKNELSRLLDRLVEKELLTEDQRAAIEEDDILAFFDTEIGQKLFGARRVEREVPFNMTLSAKEVYPDLESADEPVLIQGIIDCLFETEDGFYLLDYKTDRIHGKYRNGFEGAEPILRKRYETQIQLYARAVETMIKMPLKGRALYFFDGGHVLLF.

The 472-residue stretch at 9–480 (STWTDDQWKA…IDLNKNFRSR (472 aa)) folds into the UvrD-like helicase ATP-binding domain. Residue 30–37 (AAAGSGKT) participates in ATP binding. Positions 507–796 (QAELKLGASY…RLMTIHSSKG (290 aa)) constitute a UvrD-like helicase C-terminal domain.

It belongs to the helicase family. AddA subfamily. As to quaternary structure, heterodimer of AddA and AddB/RexB. It depends on Mg(2+) as a cofactor.

It catalyses the reaction Couples ATP hydrolysis with the unwinding of duplex DNA by translocating in the 3'-5' direction.. The enzyme catalyses ATP + H2O = ADP + phosphate + H(+). The heterodimer acts as both an ATP-dependent DNA helicase and an ATP-dependent, dual-direction single-stranded exonuclease. Recognizes the chi site generating a DNA molecule suitable for the initiation of homologous recombination. The AddA nuclease domain is required for chi fragment generation; this subunit has the helicase and 3' -&gt; 5' nuclease activities. The chain is ATP-dependent helicase/nuclease subunit A from Bacillus licheniformis (strain ATCC 14580 / DSM 13 / JCM 2505 / CCUG 7422 / NBRC 12200 / NCIMB 9375 / NCTC 10341 / NRRL NRS-1264 / Gibson 46).